The chain runs to 522 residues: N-acetylgalactosamine-6-sulfatase (522 aa).

A signal peptide spans 1–25 (MAPVAAATGWRLLLVLSAAGLGAAG). Residues 27 to 379 (PQPPNILLLL…PAMLGGQLTD (353 aa)) are catalytic domain. Residues aspartate 38, aspartate 39, and cysteine 78 each contribute to the Ca(2+) site. The active-site Nucleophile is the cysteine 78. Cysteine 78 is modified (3-oxoalanine (Cys)). Residue histidine 141 is part of the active site. A glycan (N-linked (GlcNAc...) asparagine) is linked at asparagine 203. Ca(2+)-binding residues include aspartate 288 and asparagine 289. The cysteines at positions 308 and 419 are disulfide-linked. Residue asparagine 423 is glycosylated (N-linked (GlcNAc...) asparagine). Intrachain disulfides connect cysteine 489–cysteine 518 and cysteine 501–cysteine 507.

Belongs to the sulfatase family. As to quaternary structure, homodimer. Ca(2+) serves as cofactor. The conversion to 3-oxoalanine (also known as C-formylglycine, FGly), of a serine or cysteine residue in prokaryotes and of a cysteine residue in eukaryotes, is critical for catalytic activity.

The protein localises to the lysosome. The enzyme catalyses Hydrolysis of the 6-sulfate groups of the N-acetyl-D-galactosamine 6-sulfate units of chondroitin sulfate and of the D-galactose 6-sulfate units of keratan sulfate.. The sequence is that of N-acetylgalactosamine-6-sulfatase (GALNS) from Canis lupus familiaris (Dog).